The primary structure comprises 131 residues: Profilin-11 (131 aa).

Cys-13 and Cys-115 are oxidised to a cystine. An Involved in PIP2 interaction motif is present at residues 81-97 (AVIRGKKGSGGITVKKT). Phosphothreonine is present on Thr-111.

It belongs to the profilin family. In terms of assembly, occurs in many kinds of cells as a complex with monomeric actin in a 1:1 ratio. Post-translationally, phosphorylated by MAP kinases.

Its subcellular location is the cytoplasm. The protein resides in the cytoskeleton. In terms of biological role, binds to actin and affects the structure of the cytoskeleton. At high concentrations, profilin prevents the polymerization of actin, whereas it enhances it at low concentrations. In Zea mays (Maize), this protein is Profilin-11.